The sequence spans 737 residues: 1,4-alpha-glucan branching enzyme GlgB (737 aa).

The active-site Nucleophile is the Asp-419. Residue Glu-472 is the Proton donor of the active site.

This sequence belongs to the glycosyl hydrolase 13 family. GlgB subfamily. As to quaternary structure, monomer.

The catalysed reaction is Transfers a segment of a (1-&gt;4)-alpha-D-glucan chain to a primary hydroxy group in a similar glucan chain.. It functions in the pathway glycan biosynthesis; glycogen biosynthesis. Its function is as follows. Catalyzes the formation of the alpha-1,6-glucosidic linkages in glycogen by scission of a 1,4-alpha-linked oligosaccharide from growing alpha-1,4-glucan chains and the subsequent attachment of the oligosaccharide to the alpha-1,6 position. This Cellvibrio japonicus (strain Ueda107) (Pseudomonas fluorescens subsp. cellulosa) protein is 1,4-alpha-glucan branching enzyme GlgB.